We begin with the raw amino-acid sequence, 108 residues long: Large ribosomal subunit protein bL31B (108 aa).

Residues 85-108 (PKPETSVEEVLPKGKKKAPAKKKK) form a disordered region. Residues 97-108 (KGKKKAPAKKKK) show a composition bias toward basic residues.

Belongs to the bacterial ribosomal protein bL31 family. Type B subfamily. As to quaternary structure, part of the 50S ribosomal subunit.

The protein is Large ribosomal subunit protein bL31B of Chlamydia muridarum (strain MoPn / Nigg).